Reading from the N-terminus, the 480-residue chain is Serine/threonine-protein kinase WAG2 (480 aa).

Positions 88–396 constitute a Protein kinase domain; the sequence is LKLIRHLGTG…AQDIKRHPFF (309 aa). ATP is bound by residues 94–102 and lysine 117; that span reads LGTGNLGRV. Aspartate 213 (proton acceptor) is an active-site residue.

Belongs to the protein kinase superfamily. Ser/Thr protein kinase family. In terms of tissue distribution, expressed in root tips, lateral root primordia and emerging true leaf primordia.

It is found in the cytoplasm. It localises to the cytosol. The enzyme catalyses L-seryl-[protein] + ATP = O-phospho-L-seryl-[protein] + ADP + H(+). The catalysed reaction is L-threonyl-[protein] + ATP = O-phospho-L-threonyl-[protein] + ADP + H(+). Serine/threonine-protein kinase involved in the regulation of auxin signaling. Acts as a positive regulator of cellular auxin efflux and regulates organ development by enhancing PIN-mediated polar auxin transport. Phosphorylates conserved serine residues in the PIN auxin efflux carriers. Phosphorylation of PIN proteins is required and sufficient for apical-basal PIN polarity that enables directional intercellular auxin fluxes, which mediate differential growth, tissue patterning and organogenesis. Acts as a suppressor of root waving. The sequence is that of Serine/threonine-protein kinase WAG2 (WAG2) from Arabidopsis thaliana (Mouse-ear cress).